Here is a 1487-residue protein sequence, read N- to C-terminus: Major viral transcription factor (1487 aa).

Disordered regions lie at residues 41 to 295 (AAPD…LPPG), 310 to 371 (LAKT…EEAP), 409 to 442 (REPL…SRDG), and 803 to 1007 (PPTR…HTPR). The span at 66–75 (VIPPPSPAPE) shows a compositional bias: pro residues. Composition is skewed to low complexity over residues 165–193 (PSSA…SSSS) and 201–213 (DGAG…SSSS). Residues 214–224 (DDSDSDEGGEE) are compositionally biased toward acidic residues. Residues 235-272 (AAKTPSAAGSPGPSSGGDRPAAGAATPKSCRSGAASPG) show a composition bias toward low complexity. Over residues 273–285 (APAPAPASAPAPS) the composition is skewed to pro residues. Low complexity-rich tracts occupy residues 807–829 (SQQP…AEGS), 849–860 (PSSHSQSPQHSQ), and 867–877 (ATTATCCRATQ). Residues 878 to 893 (TNARSRGQQHQPQKAR) show a composition bias toward polar residues. Over residues 920 to 929 (HGRPRGKSGK) the composition is skewed to basic residues. The span at 938-951 (AAQAGASASFSSSA) shows a compositional bias: low complexity. Residues 988–1007 (GPDRRGGFRRVPRGDCHTPR) are compositionally biased toward basic and acidic residues.

Belongs to the herpesviridae ICP4 family. A long stretch of serine residues may be a major site of phosphorylation.

It localises to the host nucleus. Its function is as follows. This IE protein is a multifunctional protein capable of migrating to the nucleus, binding to DNA, trans-activating other viral genes, and autoregulating its own synthesis. The polypeptide is Major viral transcription factor (IE) (Equine herpesvirus 1 (strain Kentucky A) (EHV-1)).